The primary structure comprises 351 residues: Molybdenum import ATP-binding protein ModC (351 aa).

Residues 1–229 (MLEINIHQQL…DILADWQSET (229 aa)) form the ABC transporter domain. 31 to 38 (GRSGAGKS) serves as a coordination point for ATP. The Mop domain occupies 290 to 351 (HSSIRNILNG…IYVQIKSVSL (62 aa)).

This sequence belongs to the ABC transporter superfamily. Molybdate importer (TC 3.A.1.8) family. The complex is composed of two ATP-binding proteins (ModC), two transmembrane proteins (ModB) and a solute-binding protein (ModA).

Its subcellular location is the cell inner membrane. It carries out the reaction molybdate(out) + ATP + H2O = molybdate(in) + ADP + phosphate + H(+). In terms of biological role, part of the ABC transporter complex ModABC involved in molybdenum import. Responsible for energy coupling to the transport system. This Haemophilus ducreyi (strain 35000HP / ATCC 700724) protein is Molybdenum import ATP-binding protein ModC.